A 181-amino-acid chain; its full sequence is Regulator of G-protein signaling 5 (181 aa).

In terms of domain architecture, RGS spans 64-180; that stretch reads SLDKLLQSNY…VRSEFYKELI (117 aa).

Its subcellular location is the cytoplasm. The protein localises to the membrane. Inhibits signal transduction by increasing the GTPase activity of G protein alpha subunits thereby driving them into their inactive GDP-bound form. Binds to G(i)-alpha and G(o)-alpha, but not to G(s)-alpha. In Rattus norvegicus (Rat), this protein is Regulator of G-protein signaling 5 (Rgs5).